The following is a 202-amino-acid chain: Proteasome subunit beta 1 (202 aa).

Methionine 1 is a propeptide (removed in mature form; by autocatalysis). Residue threonine 2 is the Nucleophile of the active site.

This sequence belongs to the peptidase T1B family. As to quaternary structure, the 20S proteasome core is composed of 14 alpha and 14 beta subunits that assemble into four stacked heptameric rings, resulting in a barrel-shaped structure. The two inner rings, each composed of seven catalytic beta subunits, are sandwiched by two outer rings, each composed of seven alpha subunits. The catalytic chamber with the active sites is on the inside of the barrel. Has a gated structure, the ends of the cylinder being occluded by the N-termini of the alpha-subunits. Is capped at one or both ends by the proteasome regulatory ATPase, PAN.

It localises to the cytoplasm. The catalysed reaction is Cleavage of peptide bonds with very broad specificity.. Its activity is regulated as follows. The formation of the proteasomal ATPase PAN-20S proteasome complex, via the docking of the C-termini of PAN into the intersubunit pockets in the alpha-rings, triggers opening of the gate for substrate entry. Interconversion between the open-gate and close-gate conformations leads to a dynamic regulation of the 20S proteasome proteolysis activity. In terms of biological role, component of the proteasome core, a large protease complex with broad specificity involved in protein degradation. The protein is Proteasome subunit beta 1 of Pyrobaculum aerophilum (strain ATCC 51768 / DSM 7523 / JCM 9630 / CIP 104966 / NBRC 100827 / IM2).